Reading from the N-terminus, the 511-residue chain is Endoglucanase B (511 aa).

The N-terminal stretch at 1–29 (MNLLSGWVRPLMLGCGLLGAALSAGSIQA) is a signal peptide. The 101-residue stretch at 30–130 (AVCEYRVTNE…AVTGAICGGQ (101 aa)) folds into the CBM2 domain. A disulfide bond links cysteine 32 and cysteine 127. A disordered region spans residues 137–173 (SVASSSSSSSVVSSTPRSSSSSVSSSVPGTSSSSSSS). Residues 180-209 (ACNWYGTLTPLCNNTSNGWGYEDGRSCVAR) enclose the CBM10 domain. Disulfide bonds link cysteine 181-cysteine 212 and cysteine 191-cysteine 206. Catalysis depends on aspartate 276, which acts as the Nucleophile. Catalysis depends on aspartate 393, which acts as the Proton donor.

The protein belongs to the glycosyl hydrolase 45 (cellulase K) family.

The protein localises to the periplasm. The enzyme catalyses Endohydrolysis of (1-&gt;4)-beta-D-glucosidic linkages in cellulose, lichenin and cereal beta-D-glucans.. In terms of biological role, this enzyme catalyzes the endohydrolysis of 1,4-beta-glucosidic linkages in cellulose, lichenin and cereal beta-D-glucans. EGB is most active against barley beta-glucan, but showed significant activity against amorphous and crystalline cellulose. The protein is Endoglucanase B (celB) of Cellvibrio japonicus (strain Ueda107) (Pseudomonas fluorescens subsp. cellulosa).